The following is a 914-amino-acid chain: Thyroid peroxidase (914 aa).

Positions 1-31 (MRTLGAMAIMLVVMGTVIFLSFILRSRDILC) are cleaved as a signal peptide. Residues 32 to 834 (GKTMKSHVIS…TCIDSGRLPR (803 aa)) are Extracellular-facing. Asn-123 carries an N-linked (GlcNAc...) asparagine glycan. A disulfide bridge connects residues Cys-136 and Cys-152. Heme b is bound at residue Asp-232. The active-site Proton acceptor is the His-233. Asp-234 is a binding site for Ca(2+). Intrachain disulfides connect Cys-253/Cys-263 and Cys-257/Cys-278. Residues Asn-271 and Asn-299 are each glycosylated (N-linked (GlcNAc...) asparagine). Ca(2+)-binding residues include Thr-313, Phe-315, Asp-317, and Ser-319. Asn-334 is a glycosylation site (N-linked (GlcNAc...) asparagine). Residues Glu-387 and His-482 each coordinate heme b. Intrachain disulfides connect Cys-586–Cys-643, Cys-684–Cys-709, Cys-730–Cys-770, Cys-756–Cys-782, Cys-788–Cys-802, Cys-796–Cys-811, and Cys-813–Cys-826. N-linked (GlcNAc...) asparagine glycosylation occurs at Asn-603. The region spanning 728 to 783 (DKCVFPEEVDNGNFVHCEESGKLVLVYSCFHGYKLQGQEQVTCTQKGWDSEPPVCK) is the Sushi domain. The 44-residue stretch at 784–827 (DVNECADLTHPPCHPSAQCKNTKGSFQCVCTDPYVLGEDEKTCI) folds into the EGF-like; calcium-binding domain. Residues 835–859 (ASWVSIALGALLIGGLASLTWIVIC) traverse the membrane as a helical segment. The Cytoplasmic portion of the chain corresponds to 860–914 (RWTHADKKATLPITERVTTQSGCRKSQGRGISPHKAAAQDTGQEPASGSRVLLCE). The disordered stretch occupies residues 881–909 (GCRKSQGRGISPHKAAAQDTGQEPASGSR).

Belongs to the peroxidase family. XPO subfamily. In terms of assembly, interacts with DUOX1, DUOX2 and CYBA. Requires Ca(2+) as cofactor. Heme b serves as cofactor. Heme is covalently bound through a H(2)O(2)-dependent autocatalytic process. Heme insertion is important for the delivery of protein at the cell surface. Post-translationally, cleaved in its N-terminal part.

It is found in the membrane. The catalysed reaction is 2 iodide + H2O2 + 2 H(+) = diiodine + 2 H2O. It catalyses the reaction [thyroglobulin]-L-tyrosine + iodide + H2O2 + H(+) = [thyroglobulin]-3-iodo-L-tyrosine + 2 H2O. The enzyme catalyses [thyroglobulin]-3-iodo-L-tyrosine + iodide + H2O2 + H(+) = [thyroglobulin]-3,5-diiodo-L-tyrosine + 2 H2O. It carries out the reaction 2 [thyroglobulin]-3,5-diiodo-L-tyrosine + H2O2 = [thyroglobulin]-L-thyroxine + [thyroglobulin]-dehydroalanine + 2 H2O. The catalysed reaction is [thyroglobulin]-3-iodo-L-tyrosine + [thyroglobulin]-3,5-diiodo-L-tyrosine + H2O2 = [thyroglobulin]-3,3',5-triiodo-L-thyronine + [thyroglobulin]-dehydroalanine + 2 H2O. The protein operates within hormone biosynthesis; thyroid hormone biosynthesis. Functionally, iodination and coupling of the hormonogenic tyrosines in thyroglobulin to yield the thyroid hormones T(3) and T(4). The protein is Thyroid peroxidase (Tpo) of Mus musculus (Mouse).